The following is a 1032-amino-acid chain: Leucine-rich repeat and coiled-coil domain-containing protein 1 (1032 aa).

LRR repeat units follow at residues T44–W65, N66–T87, K88–I109, N110–H131, and K136–M157. Residues N175–Q218 form the LRRCT domain. The tract at residues D316–R345 is disordered. Positions V318–D330 are enriched in basic and acidic residues. Residues N421–L647 are a coiled coil.

It belongs to the LRRCC1 family.

It localises to the cytoplasm. Its subcellular location is the cytoskeleton. The protein localises to the microtubule organizing center. It is found in the centrosome. The protein resides in the centriole. Its function is as follows. Required for the organization of the mitotic spindle. Maintains the structural integrity of centrosomes during mitosis. The polypeptide is Leucine-rich repeat and coiled-coil domain-containing protein 1 (LRRCC1) (Homo sapiens (Human)).